The primary structure comprises 378 residues: Chorismate synthase (378 aa).

The segment at E37–E60 is disordered. Residue R47 participates in NADP(+) binding. FMN contacts are provided by residues R124 to S126, G289, K304 to T308, and R330.

It belongs to the chorismate synthase family. As to quaternary structure, homotetramer. It depends on FMNH2 as a cofactor.

The catalysed reaction is 5-O-(1-carboxyvinyl)-3-phosphoshikimate = chorismate + phosphate. Its pathway is metabolic intermediate biosynthesis; chorismate biosynthesis; chorismate from D-erythrose 4-phosphate and phosphoenolpyruvate: step 7/7. Catalyzes the anti-1,4-elimination of the C-3 phosphate and the C-6 proR hydrogen from 5-enolpyruvylshikimate-3-phosphate (EPSP) to yield chorismate, which is the branch point compound that serves as the starting substrate for the three terminal pathways of aromatic amino acid biosynthesis. This reaction introduces a second double bond into the aromatic ring system. This chain is Chorismate synthase, found in Leptospira biflexa serovar Patoc (strain Patoc 1 / Ames).